A 1197-amino-acid polypeptide reads, in one-letter code: uncharacterized protein (1197 aa).

This is an uncharacterized protein from Sinorhizobium fredii (strain NBRC 101917 / NGR234).